Consider the following 168-residue polypeptide: MIFIDNRQNKFEVTEELTKKLEEVISFVLKEEKVKEDCEVSLVFVDNEEIRGINNETRGIDRATDVLSFPMIDYPEDKVYKDVYLEHEFDKCYFDGDELILGDIVLSLERTKEQSIEFNHSFEREACYLVTHSVLHLLGYDHMEEEEKARMRGREEELLGKLNITRES.

Residues histidine 132, histidine 136, and histidine 142 each contribute to the Zn(2+) site.

This sequence belongs to the endoribonuclease YbeY family. Zn(2+) serves as cofactor.

It localises to the cytoplasm. Single strand-specific metallo-endoribonuclease involved in late-stage 70S ribosome quality control and in maturation of the 3' terminus of the 16S rRNA. The chain is Endoribonuclease YbeY from Clostridium perfringens (strain ATCC 13124 / DSM 756 / JCM 1290 / NCIMB 6125 / NCTC 8237 / Type A).